The following is a 445-amino-acid chain: GRAM domain-containing protein 2B (445 aa).

Methionine 1 is subject to N-acetylmethionine. Residues 1–118 (MVKKRLSSSD…ERKKSSSSSQ (118 aa)) form a disordered region. Composition is skewed to polar residues over residues 18-44 (PSNS…SSEA) and 56-68 (KSPT…SSVE). Positions 82–93 (SKSSFDGSSLLS) are enriched in low complexity. Positions 94–112 (DKNDCKTESKTDSKTERKK) are enriched in basic and acidic residues. The region spanning 123–190 (MHFHKLFLDV…FSVTLIKKTK (68 aa)) is the GRAM domain. The segment covering 233–246 (TSVGNSPNPSSAEN) has biased composition (polar residues). Positions 233–252 (TSVGNSPNPSSAENSFRADR) are disordered. A phosphoserine mark is found at serine 238, serine 255, and serine 265. A disordered region spans residues 277 to 331 (DLEGYSSSGSQTPESENSRDFHVTESQTVLNVTKGETKPPRTDAHGSRAPDGKAK). Over residues 281-291 (YSSSGSQTPES) the composition is skewed to polar residues. A compositionally biased stretch (basic and acidic residues) spans 311 to 330 (GETKPPRTDAHGSRAPDGKA).

The chain is GRAM domain-containing protein 2B (Gramd2b) from Mus musculus (Mouse).